The chain runs to 420 residues: uncharacterized protein (420 aa).

This is an uncharacterized protein from Pseudanabaena tenuis (strain PCC 7409).